A 189-amino-acid polypeptide reads, in one-letter code: Testis-expressed protein 22 (189 aa).

The disordered stretch occupies residues 1-120 (MDSRQQRPQR…TQSVPTPPLQ (120 aa)). A compositionally biased stretch (low complexity) spans 14–24 (QWQLAQEQRQQ). Residues 70–87 (IDERRRLALQRMQERTDT) are compositionally biased toward basic and acidic residues. The span at 103–114 (QQTETSPSTQSV) shows a compositional bias: low complexity.

In terms of tissue distribution, mainly expressed in spermatocytes and spermatids in testis.

It localises to the cytoplasm. The protein resides in the cytoplasmic vesicle. It is found in the secretory vesicle. The protein localises to the acrosome. This chain is Testis-expressed protein 22 (Tex22), found in Mus musculus (Mouse).